Here is an 855-residue protein sequence, read N- to C-terminus: DNA mismatch repair protein MutS (855 aa).

ATP is bound at residue 616–623 (GPNMGGKS).

This sequence belongs to the DNA mismatch repair MutS family.

Its function is as follows. This protein is involved in the repair of mismatches in DNA. It is possible that it carries out the mismatch recognition step. This protein has a weak ATPase activity. The protein is DNA mismatch repair protein MutS of Salmonella paratyphi A (strain ATCC 9150 / SARB42).